The chain runs to 273 residues: MNLMAERSLENAVGEKMNATASSIKMRGEKVCVFYGEKQALFDVDLDIPEKMVTALIGPSGCGKSTFLRSLNRMNDTIEGCRIAGRITLDNEDIYDPRLDVVELRARVGMVFQKPNPFPKSIYENVAYGPRIHGLARSKAELEEIVVTSLQKASLFEEVKDRLHDAGTGLSGGQQQRLCIARAIAVSPEVILMDEPCSALDPIATAKVEELIDELRQNFTIVIVTHSMQQAARVSQRTAMFHLGNLVEVGDTEMMFTAPTEKRTQDYITGRFG.

One can recognise an ABC transporter domain in the interval 26–268 (MRGEKVCVFY…PTEKRTQDYI (243 aa)). Residue 58 to 65 (GPSGCGKS) participates in ATP binding.

The protein belongs to the ABC transporter superfamily. Phosphate importer (TC 3.A.1.7) family. The complex is composed of two ATP-binding proteins (PstB), two transmembrane proteins (PstC and PstA) and a solute-binding protein (PstS).

It is found in the cell inner membrane. It carries out the reaction phosphate(out) + ATP + H2O = ADP + 2 phosphate(in) + H(+). In terms of biological role, part of the ABC transporter complex PstSACB involved in phosphate import. Responsible for energy coupling to the transport system. The polypeptide is Phosphate import ATP-binding protein PstB (Brucella abortus (strain 2308)).